A 240-amino-acid chain; its full sequence is Glutathione-independent glyoxalase hsp3102 (240 aa).

Catalysis depends on residues C141, H142, and E175.

It belongs to the peptidase C56 family. HSP31-like subfamily.

It localises to the cytoplasm. Its subcellular location is the nucleus. The catalysed reaction is methylglyoxal + H2O = (R)-lactate + H(+). In terms of biological role, catalyzes the conversion of methylglyoxal (MG) to D-lactate in a single glutathione (GSH)-independent step. May play a role in detoxifying endogenously produced glyoxals. Involved in protection against reactive oxygen species (ROS). The chain is Glutathione-independent glyoxalase hsp3102 from Schizosaccharomyces pombe (strain 972 / ATCC 24843) (Fission yeast).